Reading from the N-terminus, the 346-residue chain is Growth hormone-inducible transmembrane protein (346 aa).

The N-terminal 45 residues, 1 to 45, are a transit peptide targeting the mitochondrion; it reads MLAARLVCLRTLPSRVFQPTFITKASPLVKNSITKNQWLVTPSRE. Topologically, residues 46–83 are mitochondrial matrix; that stretch reads YATKTRIRTHRGKTGQELKEAALEPSMEKIFKIDQMGR. Residues 84–104 form a helical membrane-spanning segment; it reads WFVAGGAAVGLGALCYYGLGM. Residues 105-126 lie on the Mitochondrial intermembrane side of the membrane; sequence SNEIGAIEKAVIWPQYVKDRIH. The chain crosses the membrane as a helical span at residues 127–147; it reads STYMYLAGSIGLTALSALAVA. Residues 148-160 lie on the Mitochondrial matrix side of the membrane; that stretch reads RTPALMNFMMTGS. The chain crosses the membrane as a helical span at residues 161–181; it reads WVTIGATFAAMIGAGMLVHSI. Over 182-191 the chain is Mitochondrial intermembrane; it reads SYEQSPGPKH. Residues 192–212 traverse the membrane as a helical segment; the sequence is LAWMLHSGVMGAVVAPLTILG. Topologically, residues 213–214 are mitochondrial matrix; the sequence is GP. Residues 215–235 form a helical membrane-spanning segment; the sequence is LLLRAAWYTAGIVGGLSTVAM. Over 236 to 245 the chain is Mitochondrial intermembrane; the sequence is CAPSEKFLNM. The chain crosses the membrane as a helical span at residues 246 to 266; it reads GAPLGVGLGLVFASSLGSMFL. The Mitochondrial matrix portion of the chain corresponds to 267 to 272; it reads PPTSVA. Residues 273–293 form a helical membrane-spanning segment; it reads GATLYSVAMYGGLVLFSMFLL. Residues 294–346 are Mitochondrial intermembrane-facing; the sequence is YDTQKVIKRAEITPMYGAQKYDPINSMLTIYMDTLNIFMRVATMLATGSNRKK.

The protein belongs to the BI1 family. In terms of assembly, interacts with LETM1 and AFG3L2. Post-translationally, undergoes AFG3L2-mediated proteolytic degradation, upon hyperpolarization of mitochondria.

It is found in the mitochondrion inner membrane. The enzyme catalyses Ca(2+)(in) + 2 H(+)(out) = Ca(2+)(out) + 2 H(+)(in). The catalysed reaction is K(+)(in) + H(+)(out) = K(+)(out) + H(+)(in). In terms of biological role, plays an important role in maintenance of mitochondrial morphology and in mediating either calcium or potassium/proton antiport. Mediates proton-dependent calcium efflux from mitochondrion. Also functions as an electroneutral mitochondrial proton/potassium exchanger. Required for the mitochondrial tubular network and cristae organization. Involved in apoptotic release of cytochrome c. Inhibits AFG3L2 proteolytic activity, stimulating respiration and stabilizing respiratory enzymes in actively respiring mitochondria. However, when mitochondria become hyperpolarized, GHITM loses its inhibitory activity toward AFG3L2 and the now active AFG3L2 turns first on GHITM and, if hyperpolarization persists, on other proteins of the mitochondria, leading to a broad remodeling of the mitochondrial proteome. The chain is Growth hormone-inducible transmembrane protein (Ghitm) from Mus musculus (Mouse).